The chain runs to 432 residues: Proline--tRNA ligase (432 aa).

It belongs to the class-II aminoacyl-tRNA synthetase family. ProS type 2 subfamily. In terms of assembly, homodimer.

It localises to the cytoplasm. The enzyme catalyses tRNA(Pro) + L-proline + ATP = L-prolyl-tRNA(Pro) + AMP + diphosphate. Functionally, catalyzes the attachment of proline to tRNA(Pro) in a two-step reaction: proline is first activated by ATP to form Pro-AMP and then transferred to the acceptor end of tRNA(Pro). The chain is Proline--tRNA ligase from Rickettsia bellii (strain OSU 85-389).